The primary structure comprises 954 residues: Regulatory protein FlaEY (954 aa).

In terms of biological role, functions in trans to modulate the level of transcription of the flagellin genes and several genes encoding chemotaxis functions. It is itself temporally controlled. This is Regulatory protein FlaEY (flaEY) from Caulobacter vibrioides (strain ATCC 19089 / CIP 103742 / CB 15) (Caulobacter crescentus).